The following is a 258-amino-acid chain: Regulatory protein RecX (258 aa).

Belongs to the RecX family.

It localises to the cytoplasm. Its function is as follows. Modulates RecA activity. The polypeptide is Regulatory protein RecX (Streptococcus agalactiae serotype Ia (strain ATCC 27591 / A909 / CDC SS700)).